The primary structure comprises 125 residues: Ribonuclease P protein component (125 aa).

This sequence belongs to the RnpA family. As to quaternary structure, consists of a catalytic RNA component (M1 or rnpB) and a protein subunit.

It carries out the reaction Endonucleolytic cleavage of RNA, removing 5'-extranucleotides from tRNA precursor.. Its function is as follows. RNaseP catalyzes the removal of the 5'-leader sequence from pre-tRNA to produce the mature 5'-terminus. It can also cleave other RNA substrates such as 4.5S RNA. The protein component plays an auxiliary but essential role in vivo by binding to the 5'-leader sequence and broadening the substrate specificity of the ribozyme. This Clostridium botulinum (strain Eklund 17B / Type B) protein is Ribonuclease P protein component.